The chain runs to 179 residues: Large ribosomal subunit protein uL5 (179 aa).

This sequence belongs to the universal ribosomal protein uL5 family. In terms of assembly, part of the 50S ribosomal subunit; part of the 5S rRNA/L5/L18/L25 subcomplex. Contacts the 5S rRNA and the P site tRNA. Forms a bridge to the 30S subunit in the 70S ribosome.

Its function is as follows. This is one of the proteins that bind and probably mediate the attachment of the 5S RNA into the large ribosomal subunit, where it forms part of the central protuberance. In the 70S ribosome it contacts protein S13 of the 30S subunit (bridge B1b), connecting the 2 subunits; this bridge is implicated in subunit movement. Contacts the P site tRNA; the 5S rRNA and some of its associated proteins might help stabilize positioning of ribosome-bound tRNAs. The chain is Large ribosomal subunit protein uL5 from Geobacillus kaustophilus (strain HTA426).